A 323-amino-acid chain; its full sequence is MEVQAEMEPTSSISLVAAVSYGIASMAMVFINKAVIMQYPHSMTVLTLQQLATSLLIHFGRRMGYTRAKGIDMATAKKLLPVSIFYNANVAFALASLKGVNIPMYIAIKRLTPLAVLISGVLFGKGKPTTQVALSVLLTAAGCVIAALGDFSFDLFGYGLALTSVFFQTMYLVLVEKSGAEDGLSSIEIMFYNSFLSLPFLSILIIVTGEFPNSLSLLLAKCSYLPFLVILILSLVMGIVLNFTMFLCTIVNSALTTTIVGVLKGVGSTTLGFVLLGGVEVHALNVSGLVVNTAGGVWYSYAKYRQKKAKPAKLMSDLEAHKK.

At 1–10 (MEVQAEMEPT) the chain is on the cytoplasmic side. A helical membrane pass occupies residues 11–31 (SSISLVAAVSYGIASMAMVFI). The Lumenal segment spans residues 32-35 (NKAV). Residues 36-58 (IMQYPHSMTVLTLQQLATSLLIH) traverse the membrane as a helical segment. At 59–78 (FGRRMGYTRAKGIDMATAKK) the chain is on the cytoplasmic side. Residues 79 to 97 (LLPVSIFYNANVAFALASL) form a helical membrane-spanning segment. Topologically, residues 98-101 (KGVN) are lumenal. Residues 102-124 (IPMYIAIKRLTPLAVLISGVLFG) traverse the membrane as a helical segment. Topologically, residues 125–132 (KGKPTTQV) are cytoplasmic. A helical membrane pass occupies residues 133 to 153 (ALSVLLTAAGCVIAALGDFSF). Position 154 (D154) is a topological domain, lumenal. The chain crosses the membrane as a helical span at residues 155 to 175 (LFGYGLALTSVFFQTMYLVLV). Topologically, residues 176–186 (EKSGAEDGLSS) are cytoplasmic. The chain crosses the membrane as a helical span at residues 187–207 (IEIMFYNSFLSLPFLSILIIV). At 208–226 (TGEFPNSLSLLLAKCSYLP) the chain is on the lumenal side. Residues 227-247 (FLVILILSLVMGIVLNFTMFL) traverse the membrane as a helical segment. Topologically, residues 248–252 (CTIVN) are cytoplasmic. The helical transmembrane segment at 253–275 (SALTTTIVGVLKGVGSTTLGFVL) threads the bilayer. At 276–278 (LGG) the chain is on the lumenal side. A helical membrane pass occupies residues 279 to 301 (VEVHALNVSGLVVNTAGGVWYSY). At 302-323 (AKYRQKKAKPAKLMSDLEAHKK) the chain is on the cytoplasmic side.

This sequence belongs to the TPT transporter family. UGnT (TC 2.A.7.15) subfamily. In terms of tissue distribution, widely expressed with highest expression in roots.

The protein resides in the golgi apparatus membrane. Functionally, nucleotide-sugar transporter that transports UDP-glucose and UDP-galactose. Plays a role in lateral root and root hair development. The protein is UDP-galactose/UDP-glucose transporter 7 of Arabidopsis thaliana (Mouse-ear cress).